Consider the following 856-residue polypeptide: DNA mismatch repair protein MutS (856 aa).

An ATP-binding site is contributed by Gly615–Ser622. The segment covering Glu798–Lys807 has biased composition (polar residues). Positions Glu798 to Gln817 are disordered.

This sequence belongs to the DNA mismatch repair MutS family.

This protein is involved in the repair of mismatches in DNA. It is possible that it carries out the mismatch recognition step. This protein has a weak ATPase activity. This is DNA mismatch repair protein MutS from Photobacterium profundum (strain SS9).